The sequence spans 240 residues: Triosephosphate isomerase (240 aa).

6-8 serves as a coordination point for substrate; that stretch reads NLK. The Electrophile role is filled by His-88. Glu-157 (proton acceptor) is an active-site residue. Positions 163 and 193 each coordinate substrate.

It belongs to the triosephosphate isomerase family. Homodimer.

It is found in the cytoplasm. It carries out the reaction D-glyceraldehyde 3-phosphate = dihydroxyacetone phosphate. It participates in carbohydrate biosynthesis; gluconeogenesis. The protein operates within carbohydrate degradation; glycolysis; D-glyceraldehyde 3-phosphate from glycerone phosphate: step 1/1. In terms of biological role, involved in the gluconeogenesis. Catalyzes stereospecifically the conversion of dihydroxyacetone phosphate (DHAP) to D-glyceraldehyde-3-phosphate (G3P). The polypeptide is Triosephosphate isomerase (Sulfurimonas denitrificans (strain ATCC 33889 / DSM 1251) (Thiomicrospira denitrificans (strain ATCC 33889 / DSM 1251))).